Consider the following 297-residue polypeptide: Large ribosomal subunit protein uL18 (297 aa).

Lys-164 is covalently cross-linked (Glycyl lysine isopeptide (Lys-Gly) (interchain with G-Cter in ubiquitin)). Residues Ser-167, Ser-176, and Ser-235 each carry the phosphoserine modification.

The protein belongs to the universal ribosomal protein uL18 family. Component of the large ribosomal subunit (LSU). Mature yeast ribosomes consist of a small (40S) and a large (60S) subunit. The 40S small subunit contains 1 molecule of ribosomal RNA (18S rRNA) and 33 different proteins (encoded by 57 genes). The large 60S subunit contains 3 rRNA molecules (25S, 5.8S and 5S rRNA) and 46 different proteins (encoded by 81 genes). Component of a hexameric 5S RNP precursor complex, composed of 5S RNA, RRS1, RPF2, RPL5, RPL11A/RPL11B and SYO1; this complex acts as a precursor for ribosome assembly. RPL5/uL18 forms a heterotrimeric complex with SYO1 and RPL11A/RPL11B/uL5. Interaction of this complex with KAP104 allows the nuclear import of the heterotrimer.

Its subcellular location is the cytoplasm. The protein resides in the nucleus. Component of the ribosome, a large ribonucleoprotein complex responsible for the synthesis of proteins in the cell. The small ribosomal subunit (SSU) binds messenger RNAs (mRNAs) and translates the encoded message by selecting cognate aminoacyl-transfer RNA (tRNA) molecules. The large subunit (LSU) contains the ribosomal catalytic site termed the peptidyl transferase center (PTC), which catalyzes the formation of peptide bonds, thereby polymerizing the amino acids delivered by tRNAs into a polypeptide chain. The nascent polypeptides leave the ribosome through a tunnel in the LSU and interact with protein factors that function in enzymatic processing, targeting, and the membrane insertion of nascent chains at the exit of the ribosomal tunnel. The polypeptide is Large ribosomal subunit protein uL18 (Saccharomyces cerevisiae (strain ATCC 204508 / S288c) (Baker's yeast)).